Here is a 186-residue protein sequence, read N- to C-terminus: Elongation factor P (186 aa).

This sequence belongs to the elongation factor P family.

Its subcellular location is the cytoplasm. It participates in protein biosynthesis; polypeptide chain elongation. Involved in peptide bond synthesis. Stimulates efficient translation and peptide-bond synthesis on native or reconstituted 70S ribosomes in vitro. Probably functions indirectly by altering the affinity of the ribosome for aminoacyl-tRNA, thus increasing their reactivity as acceptors for peptidyl transferase. This chain is Elongation factor P, found in Shewanella loihica (strain ATCC BAA-1088 / PV-4).